We begin with the raw amino-acid sequence, 428 residues long: Serine--tRNA ligase (428 aa).

Residue 231-233 (TAE) coordinates L-serine. 262-264 (RSE) lines the ATP pocket. Residue Glu-285 coordinates L-serine. 349–352 (EISS) is a binding site for ATP. Ser-385 is a binding site for L-serine.

It belongs to the class-II aminoacyl-tRNA synthetase family. Type-1 seryl-tRNA synthetase subfamily. In terms of assembly, homodimer. The tRNA molecule binds across the dimer.

It localises to the cytoplasm. The catalysed reaction is tRNA(Ser) + L-serine + ATP = L-seryl-tRNA(Ser) + AMP + diphosphate + H(+). The enzyme catalyses tRNA(Sec) + L-serine + ATP = L-seryl-tRNA(Sec) + AMP + diphosphate + H(+). It functions in the pathway aminoacyl-tRNA biosynthesis; selenocysteinyl-tRNA(Sec) biosynthesis; L-seryl-tRNA(Sec) from L-serine and tRNA(Sec): step 1/1. Its function is as follows. Catalyzes the attachment of serine to tRNA(Ser). Is also able to aminoacylate tRNA(Sec) with serine, to form the misacylated tRNA L-seryl-tRNA(Sec), which will be further converted into selenocysteinyl-tRNA(Sec). This Staphylococcus epidermidis (strain ATCC 35984 / DSM 28319 / BCRC 17069 / CCUG 31568 / BM 3577 / RP62A) protein is Serine--tRNA ligase.